The following is a 291-amino-acid chain: MTDSGLMMPAEIAGILTTAITSWWDDVNESTQWQDGIFFALCGAYALVSAVALVQLIRIQMRVPEYGWTTQKVFHLMNFVVNGVRAVLFGFHMQVFLVHPKALCWVLLDLPGLLFFSAYTLLVLFWAEIYHQARSLPTDKLRITYISVNVAVYLAQIGIWAYIWVHDNSTVELVGKIFIAVVSFIAALGFLLYGGRLFFMLRRFPIESKGRRKKLHEVGSVTAICFTCFLIRCVVVAVSAFDKDLTLDVLDHPVLNLIYYMVVEVLPSALVLFILRKLPPKRVSAQYHPIQ.

The Cytoplasmic segment spans residues 1 to 3; the sequence is MTD. The chain crosses the membrane as a helical span at residues 4 to 24; that stretch reads SGLMMPAEIAGILTTAITSWW. At 25–36 the chain is on the extracellular side; sequence DDVNESTQWQDG. N-linked (GlcNAc...) asparagine glycosylation is present at Asn28. The helical transmembrane segment at 37–57 threads the bilayer; it reads IFFALCGAYALVSAVALVQLI. Topologically, residues 58 to 78 are cytoplasmic; it reads RIQMRVPEYGWTTQKVFHLMN. The chain crosses the membrane as a helical span at residues 79-99; that stretch reads FVVNGVRAVLFGFHMQVFLVH. At 100–104 the chain is on the extracellular side; it reads PKALC. The helical transmembrane segment at 105 to 125 threads the bilayer; that stretch reads WVLLDLPGLLFFSAYTLLVLF. Topologically, residues 126–144 are cytoplasmic; sequence WAEIYHQARSLPTDKLRIT. A helical membrane pass occupies residues 145–165; it reads YISVNVAVYLAQIGIWAYIWV. Residues 166–172 lie on the Extracellular side of the membrane; the sequence is HDNSTVE. An N-linked (GlcNAc...) asparagine glycan is attached at Asn168. Residues 173 to 193 form a helical membrane-spanning segment; sequence LVGKIFIAVVSFIAALGFLLY. Topologically, residues 194 to 220 are cytoplasmic; the sequence is GGRLFFMLRRFPIESKGRRKKLHEVGS. The chain crosses the membrane as a helical span at residues 221 to 241; the sequence is VTAICFTCFLIRCVVVAVSAF. Residues 242–253 are Extracellular-facing; it reads DKDLTLDVLDHP. The chain crosses the membrane as a helical span at residues 254 to 274; the sequence is VLNLIYYMVVEVLPSALVLFI. Residues 275–291 lie on the Cytoplasmic side of the membrane; the sequence is LRKLPPKRVSAQYHPIQ.

The protein belongs to the plant tobamovirus multiplication TOM1 protein family. In terms of assembly, constituent of tobamovirus replication complex. Interacts with TOM2A and with the helicase domain of tobamovirus-encoded replication proteins.

The protein localises to the vacuole membrane. In terms of biological role, necessary for the efficient intracellular multiplication of tobamoviruses, probably being a membrane anchor promoting the formation of the replication complex. The chain is Tobamovirus multiplication protein 1 (TOM1) from Arabidopsis thaliana (Mouse-ear cress).